A 365-amino-acid polypeptide reads, in one-letter code: UDP-N-acetylglucosamine--N-acetylmuramyl-(pentapeptide) pyrophosphoryl-undecaprenol N-acetylglucosamine transferase (365 aa).

UDP-N-acetyl-alpha-D-glucosamine-binding positions include 11 to 13 (TGG), N124, R165, S192, I246, and Q291.

It belongs to the glycosyltransferase 28 family. MurG subfamily.

It is found in the cell inner membrane. It carries out the reaction di-trans,octa-cis-undecaprenyl diphospho-N-acetyl-alpha-D-muramoyl-L-alanyl-D-glutamyl-meso-2,6-diaminopimeloyl-D-alanyl-D-alanine + UDP-N-acetyl-alpha-D-glucosamine = di-trans,octa-cis-undecaprenyl diphospho-[N-acetyl-alpha-D-glucosaminyl-(1-&gt;4)]-N-acetyl-alpha-D-muramoyl-L-alanyl-D-glutamyl-meso-2,6-diaminopimeloyl-D-alanyl-D-alanine + UDP + H(+). It participates in cell wall biogenesis; peptidoglycan biosynthesis. In terms of biological role, cell wall formation. Catalyzes the transfer of a GlcNAc subunit on undecaprenyl-pyrophosphoryl-MurNAc-pentapeptide (lipid intermediate I) to form undecaprenyl-pyrophosphoryl-MurNAc-(pentapeptide)GlcNAc (lipid intermediate II). The polypeptide is UDP-N-acetylglucosamine--N-acetylmuramyl-(pentapeptide) pyrophosphoryl-undecaprenol N-acetylglucosamine transferase (Nitratidesulfovibrio vulgaris (strain DP4) (Desulfovibrio vulgaris)).